The primary structure comprises 356 residues: Cyanide hydratase (356 aa).

In terms of domain architecture, CN hydrolase spans 6–285 (YKAAAVTSEP…DGLLFVDIDL (280 aa)). Residue E46 is the Proton acceptor of the active site. The active site involves K128. Residue C163 is the Nucleophile of the active site.

Belongs to the carbon-nitrogen hydrolase superfamily. Nitrilase family. In terms of assembly, oligomer of dimers, forming left-handed helical fibers.

It catalyses the reaction formamide = hydrogen cyanide + H2O. In terms of biological role, catalyzes the hydration of cyanide to formamide. Degradation of cyanide may be important for plant pathogenic fungi in infection of cyanogenic plants. The sequence is that of Cyanide hydratase from Leptosphaeria maculans (Blackleg fungus).